The sequence spans 197 residues: Xanthine phosphoribosyltransferase (197 aa).

Xanthine contacts are provided by leucine 20 and threonine 27. 128 to 132 (ANGQA) serves as a coordination point for 5-phospho-alpha-D-ribose 1-diphosphate. Xanthine is bound at residue lysine 156.

The protein belongs to the purine/pyrimidine phosphoribosyltransferase family. Xpt subfamily. As to quaternary structure, homodimer.

It localises to the cytoplasm. The enzyme catalyses XMP + diphosphate = xanthine + 5-phospho-alpha-D-ribose 1-diphosphate. It functions in the pathway purine metabolism; XMP biosynthesis via salvage pathway; XMP from xanthine: step 1/1. In terms of biological role, converts the preformed base xanthine, a product of nucleic acid breakdown, to xanthosine 5'-monophosphate (XMP), so it can be reused for RNA or DNA synthesis. This chain is Xanthine phosphoribosyltransferase, found in Lactococcus lactis subsp. cremoris (strain SK11).